Here is an 854-residue protein sequence, read N- to C-terminus: Envelope glycoprotein B (854 aa).

Residues 1–22 (MAHTGSTVCAFLIFAVLKNVFC) form the signal peptide. The Virion surface segment spans residues 23–732 (QTPTSSSEVE…SGIINFIKNP (710 aa)). A glycan (N-linked (GlcNAc...) asparagine; by host) is linked at Asn51. 5 disulfides stabilise this stretch: Cys69-Cys527, Cys86-Cys483, Cys158-Cys223, Cys315-Cys362, and Cys552-Cys589. Residues 125–131 (IYNGIYA) are involved in fusion and/or binding to host membrane. Residue Asn180 is glycosylated (N-linked (GlcNAc...) asparagine; by host). Residues 209-217 (GWLLGGYRR) form an involved in fusion and/or binding to host membrane region. Residues Asn258 and Asn311 are each glycosylated (N-linked (GlcNAc...) asparagine; by host). Residues Asn364, Asn379, Asn385, Asn424, Asn564, and Asn630 are each glycosylated (N-linked (GlcNAc...) asparagine; by host). Residues 422–443 (QQNTTTTTTTTRSRRQRRSVSS) are disordered. The segment at 679-730 (LTDLATNRNQFVDAFGSLMDDLGVVGKTVLNAVSSVATLFSSIVSGIINFIK) is hydrophobic membrane proximal region. The chain crosses the membrane as a helical span at residues 733-753 (FGGMLLFGLIAAVVITVILLN). At 754–854 (RKAKRFAQNP…TDSFESTGVP (101 aa)) the chain is on the intravirion side. Residues 802 to 813 (HASKQPESKQDE) are compositionally biased toward basic and acidic residues. Positions 802–829 (HASKQPESKQDEEQGSTTSGPADWLNKA) are disordered. Positions 839–842 (YKPL) match the Internalization motif motif.

The protein belongs to the herpesviridae glycoprotein B family. Homotrimer; disulfide-linked. Binds to heparan sulfate proteoglycans. Interacts with gH/gL heterodimer. A proteolytic cleavage by host furin generates two subunits that remain linked by disulfide bonds.

It localises to the virion membrane. Its subcellular location is the host cell membrane. It is found in the host endosome membrane. The protein localises to the host Golgi apparatus membrane. Its function is as follows. Envelope glycoprotein that forms spikes at the surface of virion envelope. Essential for the initial attachment to heparan sulfate moieties of the host cell surface proteoglycans. Involved in fusion of viral and cellular membranes leading to virus entry into the host cell. Following initial binding to its host receptors, membrane fusion is mediated by the fusion machinery composed at least of gB and the heterodimer gH/gL. May be involved in the fusion between the virion envelope and the outer nuclear membrane during virion egress. The protein is Envelope glycoprotein B of Connochaetes taurinus (Blue wildebeest).